We begin with the raw amino-acid sequence, 401 residues long: MPVSSSLAYKNYDYDYDSIQPYFYFDNDDEDFYHHQQGQTQPPAPSEDIWKKFELLPTPPLSPSRRQSLSTAEQLEMVSEFLGDDVVNQSFICDADYSQSFIKSIIIQDCMWSGFSAAAKLEKVVSEKLASLHAARKELISDSSSNRLNASYLQDLSTSASECIGPSVVFPYPLTESSKSSKVAPSEPMLVLDTPPNSSSSSGSDSEDEEEEEEEEEEEEEEEEEEEEIDVVTVEKRQKRNEAEVSDSRYPSPLVLKRCHVSTHQHNYAAHPSTRHDQPAVKRLRLESSSSNNSSSNRQGKQRKCTSPRTSDSEDNDKRRTHNVLERQRRNELKLSFFALRDEIPEVANNEKAAKVVILKKATECIHSMQLDEQRLLSIKEQLRRKSEQLKHRLQQLRSSH.

The O-linked (GlcNAc) threonine glycan is linked to threonine 58. Residues 76–84 (EMVSEFLGD) carry the 9aaTAD motif. Disordered stretches follow at residues 177–251 (SSKS…SRYP) and 286–325 (LESSSSNNSSSNRQGKQRKCTSPRTSDSEDNDKRRTHNVL). Acidic residues predominate over residues 205–230 (DSEDEEEEEEEEEEEEEEEEEEEEID). The span at 233 to 247 (TVEKRQKRNEAEVSD) shows a compositional bias: basic and acidic residues. Positions 288-297 (SSSSNNSSSN) are enriched in low complexity. The bHLH domain occupies 317 to 369 (DKRRTHNVLERQRRNELKLSFFALRDEIPEVANNEKAAKVVILKKATECIHSM). Residues 376–397 (LLSIKEQLRRKSEQLKHRLQQL) are leucine-zipper.

Efficient DNA binding requires dimerization with another bHLH protein. Binds DNA as a heterodimer with MAX.

The protein resides in the nucleus. In terms of biological role, transcription factor that binds DNA in a non-specific manner, yet also specifically recognizes the core sequence 5'-CAC[GA]TG-3'. Activates the transcription of growth-related genes. This Cyprinus carpio (Common carp) protein is Transcriptional regulator Myc-2 (mycb).